The chain runs to 116 residues: Ribonuclease P protein component (116 aa).

This sequence belongs to the RnpA family. In terms of assembly, consists of a catalytic RNA component (M1 or rnpB) and a protein subunit.

The catalysed reaction is Endonucleolytic cleavage of RNA, removing 5'-extranucleotides from tRNA precursor.. RNaseP catalyzes the removal of the 5'-leader sequence from pre-tRNA to produce the mature 5'-terminus. It can also cleave other RNA substrates such as 4.5S RNA. The protein component plays an auxiliary but essential role in vivo by binding to the 5'-leader sequence and broadening the substrate specificity of the ribozyme. This Mycobacterium bovis (strain ATCC BAA-935 / AF2122/97) protein is Ribonuclease P protein component.